The following is a 294-amino-acid chain: Nucleotide-binding protein Smal_0950 (294 aa).

Position 16-23 (16-23) interacts with ATP; it reads GLSGSGKS. 69 to 72 contributes to the GTP binding site; that stretch reads DVRG.

Belongs to the RapZ-like family.

Its function is as follows. Displays ATPase and GTPase activities. The polypeptide is Nucleotide-binding protein Smal_0950 (Stenotrophomonas maltophilia (strain R551-3)).